We begin with the raw amino-acid sequence, 312 residues long: Ribosomal protein uL3 glutamine methyltransferase (312 aa).

It belongs to the protein N5-glutamine methyltransferase family. PrmB subfamily.

The enzyme catalyses L-glutaminyl-[ribosomal protein uL3] + S-adenosyl-L-methionine = N(5)-methyl-L-glutaminyl-[ribosomal protein uL3] + S-adenosyl-L-homocysteine + H(+). Functionally, methylates large ribosomal subunit protein uL3 on a specific glutamine residue. The polypeptide is Ribosomal protein uL3 glutamine methyltransferase (Xylella fastidiosa (strain Temecula1 / ATCC 700964)).